The primary structure comprises 121 residues: Ribosome-binding factor A (121 aa).

This sequence belongs to the RbfA family. As to quaternary structure, monomer. Binds 30S ribosomal subunits, but not 50S ribosomal subunits or 70S ribosomes.

The protein localises to the cytoplasm. In terms of biological role, one of several proteins that assist in the late maturation steps of the functional core of the 30S ribosomal subunit. Associates with free 30S ribosomal subunits (but not with 30S subunits that are part of 70S ribosomes or polysomes). Required for efficient processing of 16S rRNA. May interact with the 5'-terminal helix region of 16S rRNA. The polypeptide is Ribosome-binding factor A (Heliobacterium modesticaldum (strain ATCC 51547 / Ice1)).